A 294-amino-acid polypeptide reads, in one-letter code: tRNA pseudouridine synthase B (294 aa).

Asp39 (nucleophile) is an active-site residue.

This sequence belongs to the pseudouridine synthase TruB family. Type 1 subfamily.

The enzyme catalyses uridine(55) in tRNA = pseudouridine(55) in tRNA. In terms of biological role, responsible for synthesis of pseudouridine from uracil-55 in the psi GC loop of transfer RNAs. This Streptococcus agalactiae serotype Ia (strain ATCC 27591 / A909 / CDC SS700) protein is tRNA pseudouridine synthase B.